The primary structure comprises 457 residues: Siroheme synthase (457 aa).

Residues 1–204 (MDHLPIFCQL…QDQQAVEETT (204 aa)) form a precorrin-2 dehydrogenase /sirohydrochlorin ferrochelatase region. NAD(+) is bound by residues 22 to 23 (DV) and 43 to 44 (LA). Residue serine 128 is modified to Phosphoserine. The uroporphyrinogen-III C-methyltransferase stretch occupies residues 216-457 (GEVVLVGAGP…REKLNWFSNH (242 aa)). Proline 225 serves as a coordination point for S-adenosyl-L-methionine. Aspartate 248 functions as the Proton acceptor in the catalytic mechanism. Lysine 270 functions as the Proton donor in the catalytic mechanism. Residues 301 to 303 (GGD), isoleucine 306, 331 to 332 (TA), methionine 382, and glycine 411 contribute to the S-adenosyl-L-methionine site.

In the N-terminal section; belongs to the precorrin-2 dehydrogenase / sirohydrochlorin ferrochelatase family. This sequence in the C-terminal section; belongs to the precorrin methyltransferase family.

The catalysed reaction is uroporphyrinogen III + 2 S-adenosyl-L-methionine = precorrin-2 + 2 S-adenosyl-L-homocysteine + H(+). It carries out the reaction precorrin-2 + NAD(+) = sirohydrochlorin + NADH + 2 H(+). It catalyses the reaction siroheme + 2 H(+) = sirohydrochlorin + Fe(2+). It functions in the pathway cofactor biosynthesis; adenosylcobalamin biosynthesis; precorrin-2 from uroporphyrinogen III: step 1/1. The protein operates within cofactor biosynthesis; adenosylcobalamin biosynthesis; sirohydrochlorin from precorrin-2: step 1/1. It participates in porphyrin-containing compound metabolism; siroheme biosynthesis; precorrin-2 from uroporphyrinogen III: step 1/1. Its pathway is porphyrin-containing compound metabolism; siroheme biosynthesis; siroheme from sirohydrochlorin: step 1/1. It functions in the pathway porphyrin-containing compound metabolism; siroheme biosynthesis; sirohydrochlorin from precorrin-2: step 1/1. In terms of biological role, multifunctional enzyme that catalyzes the SAM-dependent methylations of uroporphyrinogen III at position C-2 and C-7 to form precorrin-2 via precorrin-1. Then it catalyzes the NAD-dependent ring dehydrogenation of precorrin-2 to yield sirohydrochlorin. Finally, it catalyzes the ferrochelation of sirohydrochlorin to yield siroheme. The chain is Siroheme synthase from Enterobacter sp. (strain 638).